We begin with the raw amino-acid sequence, 165 residues long: Hemolysin, heat labile (165 aa).

A disulfide bridge connects residues cysteine 151 and cysteine 161.

This sequence belongs to the TDH hemolysin family. Homodimer.

Its function is as follows. Bacterial hemolysins are exotoxins that attack blood cell membranes and cause cell rupture by mechanisms not clearly defined. The protein is Hemolysin, heat labile of Grimontia hollisae (Vibrio hollisae).